Consider the following 378-residue polypeptide: Probable cytochrome oxidase subunit 2 (378 aa).

Residues 1–8 (MIDYEFLR) are Cytoplasmic-facing. The helical transmembrane segment at 9 to 28 (FIWWVLVIVLLIGFSVTDGF) threads the bilayer. At 29–79 (DMGVTALLPVIGKKEVERRIMINTIAPHWDGNQVWLLTAGGAIFAAWPIVY) the chain is on the periplasmic side. A helical membrane pass occupies residues 80-99 (AVSFSGFYIALVLVLAALFL). At 100 to 122 (RPLGFEYRAKIDNPTWRSVWDWG) the chain is on the cytoplasmic side. A helical transmembrane segment spans residues 123-142 (LFAGGFVPALVFGVAFGNLL). Residues 143 to 164 (QGVPFHFNELTQVTYTGSFFEL) lie on the Periplasmic side of the membrane. A helical membrane pass occupies residues 165 to 184 (LNPFALLCGVISLSMLVTHG). Residues 185 to 205 (ANWLQMKTTEALRDRARTVSQ) are Cytoplasmic-facing. A helical membrane pass occupies residues 206–224 (IGSIVTLIAFVLAGVWLYS). At 225 to 261 (KDGYVVTSTIDHFAPSSPMNKEVAVETGAWFRNFNEM) the chain is on the periplasmic side. The helical transmembrane segment at 262 to 281 (PILWIFPALAVVAALLNAAF) threads the bilayer. The Cytoplasmic portion of the chain corresponds to 282-291 (SKANRCGFAF). A helical membrane pass occupies residues 292–311 (FFSALTMAGVIITAAVSMFP). Over 312 to 335 (FVMPSSSHPEQSLLMWDSTSSELT) the chain is Periplasmic. Residues 336–355 (LTLMLIFAVVFVVIALAYTI) form a helical membrane-spanning segment. Topologically, residues 356-378 (WSYSKMFGRLDANFIDKNKHSLY) are cytoplasmic.

Belongs to the cytochrome ubiquinol oxidase subunit 2 family. Heterodimer of subunits I and II.

Its subcellular location is the cell inner membrane. In terms of biological role, probable cytochrome oxidase subunit. In Haemophilus influenzae (strain ATCC 51907 / DSM 11121 / KW20 / Rd), this protein is Probable cytochrome oxidase subunit 2.